The sequence spans 265 residues: Mlc titration factor A (265 aa).

4 residues coordinate Zn(2+): His111, His148, His152, and Glu211.

It belongs to the MtfA family. Interacts with Mlc. The cofactor is Zn(2+).

Its subcellular location is the cytoplasm. In terms of biological role, involved in the modulation of the activity of the glucose-phosphotransferase system (glucose-PTS). Interacts with the transcriptional repressor Mlc, preventing its interaction with DNA and leading to the modulation of expression of genes regulated by Mlc, including ptsG, which encodes the PTS system glucose-specific EIICB component. Functionally, shows zinc-dependent metallopeptidase activity. In Escherichia coli (strain SMS-3-5 / SECEC), this protein is Mlc titration factor A.